Reading from the N-terminus, the 124-residue chain is Snake venom vascular endothelial growth factor toxin apiscin (124 aa).

The first 24 residues, M1 to G24, serve as a signal peptide directing secretion. Q25 carries the post-translational modification Pyrrolidone carboxylic acid. Intrachain disulfides connect C38-C80, C69-C115, and C73-C117.

Belongs to the PDGF/VEGF growth factor family. Snake venom VEGF subfamily. In terms of assembly, homodimer; disulfide-linked. Interacts with VEGF receptor-1 (FLT1) with a high affinity, whereas it binds to VEGF receptor-2 (KDR) with a low affinity. Does not bind VEGF receptor-3 (FLT4). As to expression, expressed by the venom gland.

It is found in the secreted. Snake venom VEGFs that may contribute to venom dispersion and prey subjugation by inducing vascular permeability and hypotension. This protein induces an increase in capillary permeability after intradermal injection, as well as a drastic hypotensive effect after intravenous injection. The hypotension is mediated by nitric oxide (NO), which is produced by VEGF-activated endothelium NO synthase. Also induces angiogenesis in vitro. Like other crotalid VEGFs, this protein interacts with VEGF receptor-1 (FLT1) with a high affinity, whereas it binds to VEGF receptor-2 (KDR) with a low affinity. The protein is Snake venom vascular endothelial growth factor toxin apiscin of Agkistrodon piscivorus piscivorus (Eastern cottonmouth).